The following is a 419-amino-acid chain: Interferon regulatory factor 3 (419 aa).

Thr3 is modified (phosphothreonine). The segment at residues 5–111 (KPRILPWLVS…DPHKVYEFVT (107 aa)) is a DNA-binding region (IRF tryptophan pentad repeat). Ser14 bears the Phosphoserine mark. Thr75 carries the phosphothreonine modification. Phosphoserine is present on residues Ser97, Ser123, and Ser135. A mediates interaction with ZDHHC11 region spans residues 140 to 419 (PKLFDGLILG…DMDFQATGNI (280 aa)). Lys188 is covalently cross-linked (Glycyl lysine isopeptide (Lys-Gly) (interchain with G-Cter in ISG15)). Positions 194–353 (EQWEFEVTAF…MWPQDQPWVK (160 aa)) are interaction with HERC5. Phosphothreonine is present on residues Thr230, Thr237, and Thr246. Glycyl lysine isopeptide (Lys-Gly) (interchain with G-Cter in ISG15) cross-links involve residues Lys353 and Lys359. An N6-acetyllysine modification is found at Lys359. Ser378 carries the post-translational modification Phosphoserine. A Diphosphoserine modification is found at Ser379. Ser379 carries the phosphoserine; by TBK1 modification. Ser388 bears the Phosphoserine; by IKKE mark. A Phosphoserine modification is found at Ser390. Phosphothreonine is present on Thr396.

The protein belongs to the IRF family. Monomer. Homodimer; phosphorylation-induced. Interacts (when phosphorylated) with CREBBP. Interacts with MAVS (via phosphorylated pLxIS motif). Interacts with TICAM1 (via phosphorylated pLxIS motif). Interacts with STING1 (via phosphorylated pLxIS motif). Interacts with IKBKE and TBK1. Interacts with TICAM2. Interacts with RBCK1. Interacts with HERC5. Interacts with DDX3X; the interaction allows the phosphorylation and activation of IRF3 by IKBKE. Interacts with TRIM21 and ULK1, in the presence of TRIM21; this interaction leads to IRF3 degradation by autophagy. Interacts with RIOK3; RIOK3 probably mediates the interaction of TBK1 with IRF3. Interacts with ILRUN; the interaction inhibits IRF3 binding to its DNA consensus sequence. Interacts with LYAR; this interaction impairs IRF3 DNA-binding activity. Interacts with TRAF3. Interacts with ZDHHC11; ZDHHC11 recruits IRF3 to STING1 upon DNA virus infection and thereby promotes IRF3 activation. Interacts with HSP90AA1; the interaction mediates IRF3 association with TOMM70. Interacts with BCL2; the interaction decreases upon Sendai virus infection. Interacts with BAX; the interaction is direct, increases upon virus infection and mediates the formation of the apoptosis complex TOMM70:HSP90AA1:IRF3:BAX. Interacts with DDX56. Interacts with NBR1. In terms of processing, constitutively phosphorylated on many Ser/Thr residues. Activated following phosphorylation by TBK1 and IKBKE. Innate adapter proteins, such as MAVS, STING1 or TICAM1, are first activated by viral RNA, cytosolic DNA, and bacterial lipopolysaccharide (LPS), respectively, leading to activation of the kinases TBK1 and IKBKE. These kinases then phosphorylate the adapter proteins on the pLxIS motif, leading to recruitment of IRF3, thereby licensing IRF3 for phosphorylation by TBK1. Phosphorylation at Ser-379 is followed by pyrophosphorylation at the same residue, promoting phosphorylation at Ser-388. Phosphorylated IRF3 dissociates from the adapter proteins, dimerizes, and then enters the nucleus to induce IFNs. Pyrophosphorylated by UAP1 following phosphorylation at Ser-379 by TBK1. Pyrophosphorylation promotes subsequent phosphorylation at Ser-388, leading to homodimerization of IRF3. Post-translationally, acetylation at Lys-359 by KAT8 inhibits recruimtent to promoters and transcription factor activity. Acetylation by KAT8 is promoted by phosphorylation at Ser-388. In terms of processing, ubiquitinated; ubiquitination involves RBCK1 leading to proteasomal degradation. Polyubiquitinated; ubiquitination involves TRIM21 leading to proteasomal degradation. Ubiquitinated by UBE3C, leading to its degradation. Deubiquitinated by USP5 on both 'Lys-48'-linked unanchored and 'Lys-63'-linked anchored polyubiquitin, leading to inhibition of anti-RNA viral innate immunity. ISGylated by HERC5 resulting in sustained IRF3 activation and in the inhibition of IRF3 ubiquitination by disrupting PIN1 binding. The phosphorylation state of IRF3 does not alter ISGylation. Post-translationally, proteolytically cleaved by apoptotic caspases during apoptosis, leading to its inactivation. Cleavage by CASP3 during virus-induced apoptosis inactivates it, preventing cytokine overproduction.

The protein localises to the cytoplasm. Its subcellular location is the nucleus. It is found in the mitochondrion. Its activity is regulated as follows. In the absence of viral infection, maintained as a monomer in an autoinhibited state. Phosphorylation by TBK1 and IKBKE disrupts this autoinhibition leading to the liberation of the DNA-binding and dimerization activities and its nuclear localization where it can activate type I IFN and ISG genes. Phosphorylation and activation follow the following steps: innate adapter proteins, such as MAVS, STING1 or TICAM1, are first activated by viral RNA, cytosolic DNA and bacterial lipopolysaccharide (LPS), respectively, leading to activation of the kinases TBK1 and IKBKE. These kinases then phosphorylate the adapter proteins on their pLxIS motif, leading to recruitment of IRF3, thereby licensing IRF3 for phosphorylation by TBK1. Phosphorylated IRF3 dissociates from the adapter proteins, dimerizes, and then enters the nucleus to induce IFNs. In terms of biological role, key transcriptional regulator of type I interferon (IFN)-dependent immune responses which plays a critical role in the innate immune response against DNA and RNA viruses. Regulates the transcription of type I IFN genes (IFN-alpha and IFN-beta) and IFN-stimulated genes (ISG) by binding to an interferon-stimulated response element (ISRE) in their promoters. Acts as a more potent activator of the IFN-beta (IFNB) gene than the IFN-alpha (IFNA) gene and plays a critical role in both the early and late phases of the IFNA/B gene induction. Found in an inactive form in the cytoplasm of uninfected cells and following viral infection, double-stranded RNA (dsRNA), or toll-like receptor (TLR) signaling, is phosphorylated by IKBKE and TBK1 kinases. This induces a conformational change, leading to its dimerization and nuclear localization and association with CREB binding protein (CREBBP) to form dsRNA-activated factor 1 (DRAF1), a complex which activates the transcription of the type I IFN and ISG genes. Can activate distinct gene expression programs in macrophages and can induce significant apoptosis in primary macrophages. The sequence is that of Interferon regulatory factor 3 (Irf3) from Mus musculus (Mouse).